Consider the following 853-residue polypeptide: Eukaryotic translation initiation factor 3 subunit C (853 aa).

Positions 1–78 are disordered; that stretch reads MSRFFAASDS…EDEDQNKVLK (78 aa). Residues 11–46 are compositionally biased toward acidic residues; sequence SSEESSEEELYSDNEASAQEDSDKDSDDDDSDDDDS. One can recognise a PCI domain in the interval 599–773; it reads FHMHINLELL…SAIIFRKGVE (175 aa). A disordered region spans residues 798-853; it reads TLEQRTQGTANAFERQGGRGGRGGGRGRGGGRGGGVPRGGRNQQFTGGALGRAIQA. Over residues 815 to 835 the composition is skewed to gly residues; sequence GRGGRGGGRGRGGGRGGGVPR.

It belongs to the eIF-3 subunit C family. In terms of assembly, component of the eukaryotic translation initiation factor 3 (eIF-3) complex.

The protein resides in the cytoplasm. Its function is as follows. Component of the eukaryotic translation initiation factor 3 (eIF-3) complex, which is involved in protein synthesis of a specialized repertoire of mRNAs and, together with other initiation factors, stimulates binding of mRNA and methionyl-tRNAi to the 40S ribosome. The eIF-3 complex specifically targets and initiates translation of a subset of mRNAs involved in cell proliferation. The polypeptide is Eukaryotic translation initiation factor 3 subunit C (Phaeosphaeria nodorum (strain SN15 / ATCC MYA-4574 / FGSC 10173) (Glume blotch fungus)).